The following is a 474-amino-acid chain: E3 ubiquitin-protein ligase CBL-C (474 aa).

The tract at residues 7–145 (PWGRQWEEAR…HALFPGGKYC (139 aa)) is 4H. Residues 7–321 (PWGRQWEEAR…GKTHNPDLTE (315 aa)) enclose the Cbl-PTB domain. Residues 146–218 (GHMYQLTKAP…FEFDVFTRLF (73 aa)) form an EF-hand-like region. Residues Asp-199, Thr-201, and Glu-210 each coordinate Ca(2+). The interval 219–321 (QPWPTLLKNW…GKTHNPDLTE (103 aa)) is SH2-like. Arg-264 contributes to the 4-O-phospho-L-tyrosine binding site. The tract at residues 322 to 350 (LGQAEPQQRIHVSEEQLQLYWAMDSTFEL) is linker. Tyr-341 carries the post-translational modification Phosphotyrosine; by SRC. The RING-type zinc finger occupies 351 to 390 (CKICAESNKDVKIEPCGHLLCSCCLAAWQHSDSQTCPFCR). Residues 351–474 (CKICAESNKD…ALGPQDPAPA (124 aa)) are interaction with RET. Residues 409-474 (TAEDSGNSSD…ALGPQDPAPA (66 aa)) are disordered. Residues 432-441 (SAPPLPPRPD) are compositionally biased toward pro residues.

As to quaternary structure, interacts with ubiquitin-conjugating enzyme E2 UBE2D2 and UBE2D3. Isoform 1 interacts with EGFR (tyrosine phosphorylated). Interacts with the SH3 domain proteins LYN and CRK. Interacts (via RING-type zinc finger) with TGFB1I1 (via LIM zinc-binding domain 2); the interaction is direct and enhances the E3 activity. Interacts directly with RET (inactive) and CD2AP; dissociates from RET upon RET activation by GDNF which also increases the interaction with CD2AP suggesting dissociation as CBLC:CD2AP complex. Interacts with SRC; the interaction is enhanced when SRC is phosphorylated at 'Tyr-419'. Phosphorylated on multiple tyrosine residues by SRC. Isoform 1, but not isoform 2, is phosphorylated on tyrosines by EGFR. In terms of processing, autoubiquitinated when phosphorylated at Tyr-341, enhanced by SRC; suggesting proteasomal degradation. As to expression, ubiquitous.

It catalyses the reaction S-ubiquitinyl-[E2 ubiquitin-conjugating enzyme]-L-cysteine + [acceptor protein]-L-lysine = [E2 ubiquitin-conjugating enzyme]-L-cysteine + N(6)-ubiquitinyl-[acceptor protein]-L-lysine.. Phosphorylation at Tyr-341 is necessary and sufficient for the activation of E3 activity. Acts as an E3 ubiquitin-protein ligase, which accepts ubiquitin from specific E2 ubiquitin-conjugating enzymes, and then transfers it to substrates promoting their degradation by the proteasome. Functionally coupled with the E2 ubiquitin-protein ligases UB2D1, UB2D2 and UB2D3. Regulator of EGFR mediated signal transduction; upon EGF activation, ubiquitinates EGFR. Isoform 1, but not isoform 2, inhibits EGF stimulated MAPK1 activation. Promotes ubiquitination of SRC phosphorylated at 'Tyr-419'. In collaboration with CD2AP may act as regulatory checkpoint for Ret signaling by modulating the rate of RET degradation after ligand activation; CD2AP converts it from an inhibitor to a promoter of RET degradation; the function limits the potency of GDNF on neuronal survival. This chain is E3 ubiquitin-protein ligase CBL-C (CBLC), found in Homo sapiens (Human).